Reading from the N-terminus, the 54-residue chain is Large ribosomal subunit protein bL33A (54 aa).

Belongs to the bacterial ribosomal protein bL33 family.

This Mycobacterium marinum (strain ATCC BAA-535 / M) protein is Large ribosomal subunit protein bL33A.